The chain runs to 392 residues: MITLITEQLQKQTLDELKCTRFSISLPLPDHADISNCGNSFQLVSEGASWRGLPHCSCAEFQDSLNFSYHPSGLSLHLRPPSRGNSPKEQPFSQVLRPEPPDPEKLPVPPAPPSKRHCRSLSVPVDLSRWQPVWRPAPSKLWTPIKHRGSGGGGGPQVPHQSPPKRVSSLRFLQAPSASSQCAPAHRPYSPPFFSLALAQDSSRPCAASPQSGSWESDAESLSPCPPQRRFSLSPSLGPQASRFLPSARSSPASSPELPWRPRGLRNLPRSRSQPCDLDARKTGVKRRHEEDPRRLRPSLDFDKMNQKPYSGGLCLQETAREGSSISPPWFMACSPPPLSASCSPTGGSSQVLSESEEEEEGAVRWGRQALSKRTLCQRDFGDLDLNLIEEN.

At Met1 the chain carries N-acetylmethionine. The disordered stretch occupies residues 78–119 (LRPPSRGNSPKEQPFSQVLRPEPPDPEKLPVPPAPPSKRHCR). The span at 83–93 (RGNSPKEQPFS) shows a compositional bias: polar residues. Residues Ser122, Ser162, Ser232, Ser234, Ser255, and Ser273 each carry the phosphoserine modification. Disordered stretches follow at residues 141 to 167 (LWTP…PKRV) and 204 to 294 (RPCA…EDPR). The span at 241–256 (ASRFLPSARSSPASSP) shows a compositional bias: low complexity. Positions 278 to 294 (LDARKTGVKRRHEEDPR) are enriched in basic and acidic residues. Ser299 is subject to Phosphoserine. Residues 341–364 (ASCSPTGGSSQVLSESEEEEEGAV) are disordered.

This sequence belongs to the FAM53 family.

The polypeptide is Protein FAM53C (Homo sapiens (Human)).